A 138-amino-acid polypeptide reads, in one-letter code: Large ribosomal subunit protein eL32 (138 aa).

It belongs to the eukaryotic ribosomal protein eL32 family.

This chain is Large ribosomal subunit protein eL32, found in Saccharolobus islandicus (strain Y.N.15.51 / Yellowstone #2) (Sulfolobus islandicus).